Consider the following 300-residue polypeptide: Transcription termination/antitermination protein NusG (300 aa).

The tract at residues Met-1–Ile-99 is disordered. 2 stretches are compositionally biased toward acidic residues: residues Glu-14–Asp-41 and Glu-47–Asp-97.

This sequence belongs to the NusG family.

Participates in transcription elongation, termination and antitermination. This chain is Transcription termination/antitermination protein NusG, found in Streptomyces coelicolor (strain ATCC BAA-471 / A3(2) / M145).